Reading from the N-terminus, the 283-residue chain is Bifunctional protein FolD (283 aa).

NADP(+) is bound by residues 164–166 (GRS), Ser189, and Ile230.

The protein belongs to the tetrahydrofolate dehydrogenase/cyclohydrolase family. In terms of assembly, homodimer.

It catalyses the reaction (6R)-5,10-methylene-5,6,7,8-tetrahydrofolate + NADP(+) = (6R)-5,10-methenyltetrahydrofolate + NADPH. It carries out the reaction (6R)-5,10-methenyltetrahydrofolate + H2O = (6R)-10-formyltetrahydrofolate + H(+). Its pathway is one-carbon metabolism; tetrahydrofolate interconversion. Catalyzes the oxidation of 5,10-methylenetetrahydrofolate to 5,10-methenyltetrahydrofolate and then the hydrolysis of 5,10-methenyltetrahydrofolate to 10-formyltetrahydrofolate. The chain is Bifunctional protein FolD from Pelobacter propionicus (strain DSM 2379 / NBRC 103807 / OttBd1).